Here is a 254-residue protein sequence, read N- to C-terminus: 3-deoxy-manno-octulosonate cytidylyltransferase (254 aa).

Belongs to the KdsB family.

The protein localises to the cytoplasm. It carries out the reaction 3-deoxy-alpha-D-manno-oct-2-ulosonate + CTP = CMP-3-deoxy-beta-D-manno-octulosonate + diphosphate. The protein operates within nucleotide-sugar biosynthesis; CMP-3-deoxy-D-manno-octulosonate biosynthesis; CMP-3-deoxy-D-manno-octulosonate from 3-deoxy-D-manno-octulosonate and CTP: step 1/1. Its pathway is bacterial outer membrane biogenesis; lipopolysaccharide biosynthesis. Functionally, activates KDO (a required 8-carbon sugar) for incorporation into bacterial lipopolysaccharide in Gram-negative bacteria. This is 3-deoxy-manno-octulosonate cytidylyltransferase from Polynucleobacter necessarius subsp. necessarius (strain STIR1).